Reading from the N-terminus, the 396-residue chain is MDTRSSLCPKTQAVVAVFWGPGCHLSTCIEMFNITTQALGSAHNGTFSEVNCPDTEWWSWLNAIQAPFLWVLFLLAALENIFVLSVFCLHKTNCTVAEIYLGNLAAADLILACGLPFWAITIANNFDWLFGEVLCRVVNTMIYMNLYSSICFLMLVSIDRYLALVKTMSMGRMRGVRWAKLYSLVIWSCTLLLSSPMLVFRTMKDYREEGHNVTACVIVYPSRSWEVFTNMLLNLVGFLLPLSIITFCTVRIMQVLRNNEMKKFKEVQTEKKATVLVLAVLGLFVLCWFPFQISTFLDTLLRLGVLSGCWNERAVDIVTQISSYVAYSNSCLNPLVYVIVGKRFRKKSREVYQAICRKGGCMGESVQMENSMGTLRTSISVDRQIHKLQDWAGNKQ.

Topologically, residues 1-65 are extracellular; the sequence is MDTRSSLCPK…EWWSWLNAIQ (65 aa). N-linked (GlcNAc...) asparagine glycans are attached at residues Asn33 and Asn44. The chain crosses the membrane as a helical span at residues 66–89; it reads APFLWVLFLLAALENIFVLSVFCL. Residues 90-98 are Cytoplasmic-facing; sequence HKTNCTVAE. Residues 99-123 form a helical membrane-spanning segment; it reads IYLGNLAAADLILACGLPFWAITIA. Over 124 to 136 the chain is Extracellular; sequence NNFDWLFGEVLCR. A disulfide bond links Cys135 and Cys216. The helical transmembrane segment at 137–158 threads the bilayer; that stretch reads VVNTMIYMNLYSSICFLMLVSI. Over 159–180 the chain is Cytoplasmic; that stretch reads DRYLALVKTMSMGRMRGVRWAK. Tyr161 bears the Phosphotyrosine mark. Residues 181–203 form a helical membrane-spanning segment; that stretch reads LYSLVIWSCTLLLSSPMLVFRTM. Residues 204–226 are Extracellular-facing; the sequence is KDYREEGHNVTACVIVYPSRSWE. Asn212 is a glycosylation site (N-linked (GlcNAc...) asparagine). Residues 227–253 traverse the membrane as a helical segment; the sequence is VFTNMLLNLVGFLLPLSIITFCTVRIM. The Cytoplasmic portion of the chain corresponds to 254-272; it reads QVLRNNEMKKFKEVQTEKK. A helical membrane pass occupies residues 273 to 297; it reads ATVLVLAVLGLFVLCWFPFQISTFL. Residues 298–316 are Extracellular-facing; it reads DTLLRLGVLSGCWNERAVD. A helical membrane pass occupies residues 317 to 340; sequence IVTQISSYVAYSNSCLNPLVYVIV. The Cytoplasmic portion of the chain corresponds to 341–396; the sequence is GKRFRKKSREVYQAICRKGGCMGESVQMENSMGTLRTSISVDRQIHKLQDWAGNKQ. At Tyr352 the chain carries Phosphotyrosine. Residue Cys356 is the site of S-palmitoyl cysteine attachment. A phosphoserine mark is found at Ser365 and Ser371. At Thr374 the chain carries Phosphothreonine. A phosphoserine; by GRK6 mark is found at Ser378 and Ser380.

Belongs to the G-protein coupled receptor 1 family. Bradykinin receptor subfamily. BDKRB2 sub-subfamily. Forms a complex with PECAM1 and GNAQ. Interacts with PECAM1. Post-translationally, diphosphorylation at Ser-365 and Ser-371, at Ser-378 and Ser-380, and at Thr-374 and Ser-380 seem to be correlated pairwise. Palmitoylation at Cys-356 and phosphorylation at Tyr-352 seem to be mutually exclusive. As to expression, uterus, vas deferens, kidney, ileum, heart, testis, lung and brain.

It localises to the cell membrane. Functionally, receptor for bradykinin. It is associated with G proteins that activate a phosphatidylinositol-calcium second messenger system. This Rattus norvegicus (Rat) protein is B2 bradykinin receptor (Bdkrb2).